The chain runs to 289 residues: Energy-coupling factor transporter ATP-binding protein EcfA2 (289 aa).

Positions 3 to 246 (IRFKQVDFTY…TQWLKEKQLG (244 aa)) constitute an ABC transporter domain. An ATP-binding site is contributed by 40–47 (GHTGSGKS).

This sequence belongs to the ABC transporter superfamily. Energy-coupling factor EcfA family. As to quaternary structure, forms a stable energy-coupling factor (ECF) transporter complex composed of 2 membrane-embedded substrate-binding proteins (S component), 2 ATP-binding proteins (A component) and 2 transmembrane proteins (T component).

Its subcellular location is the cell membrane. ATP-binding (A) component of a common energy-coupling factor (ECF) ABC-transporter complex. Unlike classic ABC transporters this ECF transporter provides the energy necessary to transport a number of different substrates. The sequence is that of Energy-coupling factor transporter ATP-binding protein EcfA2 from Enterococcus faecalis (strain ATCC 700802 / V583).